Here is a 387-residue protein sequence, read N- to C-terminus: 4-hydroxy-3-methylbut-2-en-1-yl diphosphate synthase (flavodoxin) (387 aa).

Positions 280, 283, 315, and 322 each coordinate [4Fe-4S] cluster.

This sequence belongs to the IspG family. It depends on [4Fe-4S] cluster as a cofactor.

The catalysed reaction is (2E)-4-hydroxy-3-methylbut-2-enyl diphosphate + oxidized [flavodoxin] + H2O + 2 H(+) = 2-C-methyl-D-erythritol 2,4-cyclic diphosphate + reduced [flavodoxin]. It participates in isoprenoid biosynthesis; isopentenyl diphosphate biosynthesis via DXP pathway; isopentenyl diphosphate from 1-deoxy-D-xylulose 5-phosphate: step 5/6. Its function is as follows. Converts 2C-methyl-D-erythritol 2,4-cyclodiphosphate (ME-2,4cPP) into 1-hydroxy-2-methyl-2-(E)-butenyl 4-diphosphate. The polypeptide is 4-hydroxy-3-methylbut-2-en-1-yl diphosphate synthase (flavodoxin) (Mycobacterium bovis (strain ATCC BAA-935 / AF2122/97)).